The primary structure comprises 493 residues: EGF-containing fibulin-like extracellular matrix protein 1 (493 aa).

An N-terminal signal peptide occupies residues 1-17 (MLKALFLTMLTLALVKS). The EGF-like 1; atypical domain maps to 26 to 71 (YTQCTDGYEWDPVRQQCKDIDECDIVPDACKGGMKCVNHYGGYLCL). The EGF-like 2; calcium-binding domain occupies 173–213 (DIDECTAGTHNCRADQVCINLRGSFACQCPPGYQKRGEQCV). Intrachain disulfides connect C177–C190, C184–C199, C201–C212, C218–C228, C224–C237, C239–C252, C258–C268, C264–C277, C279–C292, C298–C309, C305–C318, C320–C332, C338–C350, C344–C359, and C365–C377. The EGF-like 3; calcium-binding domain occupies 214–253 (DIDECTIPPYCHQRCVNTPGSFYCQCSPGFQLAANNYTCV). N-linked (GlcNAc...) asparagine glycosylation is present at N249. One can recognise an EGF-like 4; calcium-binding domain in the interval 254 to 293 (DINECDASNQCAQQCYNILGSFICQCNQGYELSSDRLNCE). The interval 259–493 (DASNQCAQQC…LTIIVGPFSF (235 aa)) is mediates interaction with TIMP3. The EGF-like 5; calcium-binding domain maps to 294-333 (DIDECRTSSYLCQYQCVNEPGKFSCMCPQGYQVVRSRTCQ). Residues 334–378 (DINECETTNECREDEMCWNYHGGFRCYPRNPCQDPYILTPENRCV) enclose the EGF-like 6; calcium-binding domain.

This sequence belongs to the fibulin family. As to quaternary structure, interacts with ECM1. Interacts with TIMP3.

Its subcellular location is the secreted. It is found in the extracellular space. It localises to the extracellular matrix. Its function is as follows. Binds EGFR, the EGF receptor, inducing EGFR autophosphorylation and the activation of downstream signaling pathways. May play a role in cell adhesion and migration. May function as a negative regulator of chondrocyte differentiation. In the olfactory epithelium, it may regulate glial cell migration, differentiation and the ability of glial cells to support neuronal neurite outgrowth. The sequence is that of EGF-containing fibulin-like extracellular matrix protein 1 (EFEMP1) from Macaca fascicularis (Crab-eating macaque).